A 332-amino-acid polypeptide reads, in one-letter code: 4-hydroxythreonine-4-phosphate dehydrogenase (332 aa).

H138 and T139 together coordinate substrate. Residues H168, H213, and H269 each coordinate a divalent metal cation. Substrate is bound by residues K277, N286, and R295.

It belongs to the PdxA family. In terms of assembly, homodimer. Zn(2+) serves as cofactor. The cofactor is Mg(2+). It depends on Co(2+) as a cofactor.

Its subcellular location is the cytoplasm. The enzyme catalyses 4-(phosphooxy)-L-threonine + NAD(+) = 3-amino-2-oxopropyl phosphate + CO2 + NADH. The protein operates within cofactor biosynthesis; pyridoxine 5'-phosphate biosynthesis; pyridoxine 5'-phosphate from D-erythrose 4-phosphate: step 4/5. Its function is as follows. Catalyzes the NAD(P)-dependent oxidation of 4-(phosphooxy)-L-threonine (HTP) into 2-amino-3-oxo-4-(phosphooxy)butyric acid which spontaneously decarboxylates to form 3-amino-2-oxopropyl phosphate (AHAP). The polypeptide is 4-hydroxythreonine-4-phosphate dehydrogenase (Vibrio parahaemolyticus serotype O3:K6 (strain RIMD 2210633)).